The following is a 431-amino-acid chain: Arginine biosynthesis bifunctional protein ArgJ, mitochondrial (431 aa).

Positions 174, 200, 211, 297, 426, and 431 each coordinate substrate. Residue T211 is the Nucleophile of the active site.

It belongs to the ArgJ family. As to quaternary structure, heterodimer of an alpha and a beta chain. Post-translationally, the alpha and beta chains are autoproteolytically processed from a single precursor protein within the mitochondrion.

It is found in the mitochondrion matrix. The catalysed reaction is N(2)-acetyl-L-ornithine + L-glutamate = N-acetyl-L-glutamate + L-ornithine. It carries out the reaction L-glutamate + acetyl-CoA = N-acetyl-L-glutamate + CoA + H(+). It participates in amino-acid biosynthesis; L-arginine biosynthesis; L-ornithine and N-acetyl-L-glutamate from L-glutamate and N(2)-acetyl-L-ornithine (cyclic): step 1/1. Its pathway is amino-acid biosynthesis; L-arginine biosynthesis; N(2)-acetyl-L-ornithine from L-glutamate: step 1/4. Functionally, catalyzes two activities which are involved in the cyclic version of arginine biosynthesis: the synthesis of acetylglutamate from glutamate and acetyl-CoA, and of ornithine by transacetylation between acetylornithine and glutamate. This Yarrowia lipolytica (strain CLIB 122 / E 150) (Yeast) protein is Arginine biosynthesis bifunctional protein ArgJ, mitochondrial.